Reading from the N-terminus, the 669-residue chain is NAD-dependent malic enzyme, mitochondrial (669 aa).

Residues 33–43 (IQQSRLYSSNT) show a composition bias toward polar residues. The tract at residues 33-68 (IQQSRLYSSNTRSHKATTTRENTFQKPYSDEEVTKT) is disordered. Residue arginine 142 participates in fumarate binding. Tyrosine 187 (proton donor) is an active-site residue. The Proton acceptor role is filled by lysine 259. A divalent metal cation is bound by residues glutamate 330, aspartate 331, and aspartate 354. Residues alanine 387 and alanine 390 each contribute to the NAD(+) site. (S)-malate contacts are provided by asparagine 499 and asparagine 539.

This sequence belongs to the malic enzymes family. Mg(2+) serves as cofactor. Mn(2+) is required as a cofactor.

Its subcellular location is the mitochondrion matrix. It carries out the reaction (S)-malate + NAD(+) = pyruvate + CO2 + NADH. The enzyme catalyses oxaloacetate + H(+) = pyruvate + CO2. NAD-dependent mitochondrial malic enzyme that catalyzes the oxidative decarboxylation of malate to pyruvate. The polypeptide is NAD-dependent malic enzyme, mitochondrial (MAE1) (Saccharomyces cerevisiae (strain ATCC 204508 / S288c) (Baker's yeast)).